A 305-amino-acid chain; its full sequence is Chromatin modification-related protein EAF3 (305 aa).

Positions 14–67 (VLAYHGPLLYEARVILAEVWDESNTLLGTVGPHYFIHYKGWKQTWDEWVPESRL) constitute a Tudor-knot domain. Positions 86–127 (AKKGRSTGGSGGTGSPGAGKGGLKDKKKDTKKRGRDAMESES) are disordered. The span at 91–106 (STGGSGGTGSPGAGKG) shows a compositional bias: gly residues. Residues 131–304 (KRPEVKIVIP…TTTHYQNLSR (174 aa)) enclose the MRG domain.

Belongs to the MRG family. Component of the NuA4 histone acetyltransferase complex.

It is found in the nucleus. Functionally, involved in deacetylation of histones, chromatin assembly and chromosome segregation. May act as a transcriptional oscillator, directing histone deacetylases to specific chromosomal domains. Component of the NuA4 histone acetyltransferase complex which is involved in transcriptional activation of selected genes principally by acetylation of nucleosomal histone H4 and H2A. The NuA4 complex is also involved in DNA repair. The sequence is that of Chromatin modification-related protein EAF3 (EAF3) from Cryptococcus neoformans var. neoformans serotype D (strain B-3501A) (Filobasidiella neoformans).